A 384-amino-acid chain; its full sequence is Putative odorant receptor 98b (384 aa).

Residues Met-1–Arg-34 lie on the Cytoplasmic side of the membrane. A helical membrane pass occupies residues Ser-35–Gln-55. Over Asn-56–Ser-66 the chain is Extracellular. Residues Leu-67 to Tyr-87 form a helical membrane-spanning segment. The Cytoplasmic portion of the chain corresponds to Lys-88–Tyr-128. The chain crosses the membrane as a helical span at residues Ala-129–Ile-149. Residues Ser-150 to Tyr-177 are Extracellular-facing. Residues Ile-178–Val-198 form a helical membrane-spanning segment. The Cytoplasmic portion of the chain corresponds to Asp-199–Pro-258. The chain crosses the membrane as a helical span at residues Leu-259–Ala-279. Residues Asn-280 to Pro-284 lie on the Extracellular side of the membrane. Residues Ala-285–Phe-305 traverse the membrane as a helical segment. Residues Cys-306–Leu-329 lie on the Cytoplasmic side of the membrane. Residues Leu-330–Gly-350 form a helical membrane-spanning segment. Residues Cys-351–Asp-384 lie on the Extracellular side of the membrane.

This sequence belongs to the insect chemoreceptor superfamily. Heteromeric odorant receptor channel (TC 1.A.69) family. Or1a subfamily. In terms of assembly, interacts with Orco. Complexes exist early in the endomembrane system in olfactory sensory neurons (OSNs), coupling these complexes to the conserved ciliary trafficking pathway.

It is found in the cell membrane. Odorant receptor which mediates acceptance or avoidance behavior, depending on its substrates. The odorant receptor repertoire encodes a large collection of odor stimuli that vary widely in identity, intensity, and duration. May form a complex with Orco to form odorant-sensing units, providing sensitive and prolonged odorant signaling and calcium permeability. The protein is Putative odorant receptor 98b (Or98b) of Drosophila melanogaster (Fruit fly).